A 1195-amino-acid polypeptide reads, in one-letter code: Phosphatidylinositol-3,5-bisphosphate 3-phosphatase MTMR4 (1195 aa).

Serine 8 carries the post-translational modification Phosphoserine. Residues 153 to 570 (EHIRCRQEAE…RALHLWTAVY (418 aa)) enclose the Myotubularin phosphatase domain. A 1,2-diacyl-sn-glycero-3-phospho-(1D-myo-inositol-3,5-bisphosphate) is bound by residues asparagine 320, asparagine 345, and isoleucine 346. The a 1,2-diacyl-sn-glycero-3-phospho-(1D-myo-inositol-3-phosphate) site is built by asparagine 320, asparagine 345, and isoleucine 346. The active-site Phosphocysteine intermediate is cysteine 407. A 1,2-diacyl-sn-glycero-3-phospho-(1D-myo-inositol-3,5-bisphosphate) contacts are provided by serine 408, aspartate 409, glycine 410, tryptophan 411, aspartate 412, arginine 413, lysine 449, and arginine 453. Residues serine 408, aspartate 409, glycine 410, tryptophan 411, aspartate 412, and arginine 413 each contribute to the a 1,2-diacyl-sn-glycero-3-phospho-(1D-myo-inositol-3-phosphate) site. Arginine 453 contributes to the a 1,2-diacyl-sn-glycero-3-phospho-(1D-myo-inositol-3-phosphate) binding site. 2 positions are modified to phosphoserine: serine 610 and serine 629. Disordered stretches follow at residues 645–756 (EPWH…EHCP), 780–800 (ESSQNSPTGTPQQAQPDSMLG), and 827–877 (DPST…LLEN). A compositionally biased stretch (basic and acidic residues) spans 720-729 (PEIKVLEETK). Composition is skewed to polar residues over residues 780 to 795 (ESSQNSPTGTPQQAQP) and 831 to 854 (DFLNQDPSGSVASISHQEQLSSVP). The PY-motif; substrate motif for NEDD4 signature appears at 1004–1008 (VPPLY). The stretch at 1023–1055 (HRLRQIEAGYKQEVEQLRRQVRELQMRLDIRHC) forms a coiled coil. The segment at 1114–1174 (DHMASHCYNC…VCNSCYEHIQ (61 aa)) adopts an FYVE-type zinc-finger fold. Zn(2+) contacts are provided by cysteine 1120, cysteine 1123, cysteine 1136, cysteine 1139, cysteine 1144, cysteine 1147, cysteine 1166, and cysteine 1169.

Belongs to the protein-tyrosine phosphatase family. Non-receptor class myotubularin subfamily. Homooligomeric. Forms MTMR3:MTMR4 heterooligomers; regulates the localization of both proteins. The MTMR3:MTMR4 heterooligomer can also recruit both CEP55 and PLK1; occurs during early mitosis, regulates the phosphorylation of CEP55 by PLK1 and its recruitment to the midbody where it can mediate cell abscission. Interacts with SMAD2 and SMAD3; negatively regulates TGF-beta signaling through SMAD2 and SMAD3 dephosphorylation and retention in endosomes. Interacts with SMAD1; negatively regulates BMP signaling through SMAD1 dephosphorylation and retention in endosomes. In terms of processing, ubiquitinated. Ubiquitination by NEDD4 probably leads to proteasomal degradation. Phosphorylated by CDK1 during mitosis. Expressed in brain, heart, kidney, spleen, liver, colon, testis, muscle, placenta, thyroid gland, pancreas, ovary, prostate, skin, peripheral blood, and bone marrow.

It is found in the early endosome membrane. The protein localises to the recycling endosome membrane. It localises to the late endosome membrane. The protein resides in the cytoplasmic vesicle. Its subcellular location is the phagosome membrane. The enzyme catalyses a 1,2-diacyl-sn-glycero-3-phospho-(1D-myo-inositol-3-phosphate) + H2O = a 1,2-diacyl-sn-glycero-3-phospho-(1D-myo-inositol) + phosphate. It carries out the reaction a 1,2-diacyl-sn-glycero-3-phospho-(1D-myo-inositol-3,5-bisphosphate) + H2O = a 1,2-diacyl-sn-glycero-3-phospho-(1D-myo-inositol-5-phosphate) + phosphate. It catalyses the reaction 1,2-dioctanoyl-sn-glycero-3-phospho-(1-D-myo-inositol-3-phosphate) + H2O = 1,2-dioctanoyl-sn-glycero-3-phospho-(1D-myo-inositol) + phosphate. The catalysed reaction is 1,2-dioctanoyl-sn-glycero-3-phospho-(1D-myo-inositol-3,5-bisphosphate) + H2O = 1,2-dioctanoyl-sn-glycero-3-phospho-(1D-myo-inositol-5-phosphate) + phosphate. Its activity is regulated as follows. The phosphatidylinositol-3-phosphate phosphatase activity is inhibited by vanadate. In terms of biological role, lipid phosphatase that specifically dephosphorylates the D-3 position of phosphatidylinositol 3-phosphate and phosphatidylinositol 3,5-bisphosphate, generating phosphatidylinositol and phosphatidylinositol 5-phosphate. Decreases the levels of phosphatidylinositol 3-phosphate, a phospholipid found in cell membranes where it acts as key regulator of both cell signaling and intracellular membrane traffic, in a subset of endosomal membranes to negatively regulate both endocytic recycling and trafficking and/or maturation of endosomes toward lysosomes. Through phosphatidylinositol 3-phosphate turnover in phagosome membranes regulates phagocytosis and phagosome maturation. By decreasing phosphatidylinositol 3-monophosphate (PI3P) levels in immune cells it can also regulate the innate immune response. Beside its lipid phosphatase activity, can also function as a molecular adapter to regulate midbody abscission during mitotic cytokinesis. Can also negatively regulate TGF-beta and BMP signaling through Smad proteins dephosphorylation and retention in endosomes. The chain is Phosphatidylinositol-3,5-bisphosphate 3-phosphatase MTMR4 from Homo sapiens (Human).